Reading from the N-terminus, the 257-residue chain is Pyridoxine 5'-phosphate synthase (257 aa).

Position 6 (N6) interacts with 3-amino-2-oxopropyl phosphate. 8-9 provides a ligand contact to 1-deoxy-D-xylulose 5-phosphate; it reads DH. A 3-amino-2-oxopropyl phosphate-binding site is contributed by R17. H41 (proton acceptor) is an active-site residue. Residues R43 and H48 each coordinate 1-deoxy-D-xylulose 5-phosphate. E68 acts as the Proton acceptor in catalysis. Position 98 (T98) interacts with 1-deoxy-D-xylulose 5-phosphate. The Proton donor role is filled by H210. 3-amino-2-oxopropyl phosphate is bound by residues G211 and 232 to 233; that span reads GQ.

This sequence belongs to the PNP synthase family. In terms of assembly, homooctamer; tetramer of dimers.

It localises to the cytoplasm. The enzyme catalyses 3-amino-2-oxopropyl phosphate + 1-deoxy-D-xylulose 5-phosphate = pyridoxine 5'-phosphate + phosphate + 2 H2O + H(+). It functions in the pathway cofactor biosynthesis; pyridoxine 5'-phosphate biosynthesis; pyridoxine 5'-phosphate from D-erythrose 4-phosphate: step 5/5. Catalyzes the complicated ring closure reaction between the two acyclic compounds 1-deoxy-D-xylulose-5-phosphate (DXP) and 3-amino-2-oxopropyl phosphate (1-amino-acetone-3-phosphate or AAP) to form pyridoxine 5'-phosphate (PNP) and inorganic phosphate. The sequence is that of Pyridoxine 5'-phosphate synthase from Campylobacter jejuni subsp. doylei (strain ATCC BAA-1458 / RM4099 / 269.97).